Here is a 96-residue protein sequence, read N- to C-terminus: MTSALENYINRTVAVITSDGRMIVGTLKGFDQTINLILDESHERVFSSSQGVEQVVLGLYIVRGDNVAVIGEIDEETDSALDLGNIRAEPLNSVAH.

In terms of domain architecture, Sm spans 1–76 (MTSALENYIN…VAVIGEIDEE (76 aa)). N-acetylthreonine is present on T2.

Belongs to the snRNP Sm proteins family. Component of the precatalytic spliceosome (spliceosome B complex). Component of the U4/U6-U5 tri-snRNP complex, a building block of the precatalytic spliceosome (spliceosome B complex). The U4/U6-U5 tri-snRNP complex is composed of the U4, U6 and U5 snRNAs and at least PRPF3, PRPF4, PRPF6, PRPF8, PRPF31, SNRNP200, TXNL4A, SNRNP40, SNRPB, SNRPD1, SNRPD2, SNRPD3, SNRPE, SNRPF, SNRPG, DDX23, CD2BP2, PPIH, SNU13, EFTUD2, SART1 and USP39, plus LSM2, LSM3, LSM4, LSM5, LSM6, LSM7 and LSM8. LSM2, LSM3, LSM4, LSM5, LSM6, LSM7 and LSM8 form a heptameric, ring-shaped subcomplex (the LSM2-8 complex) that is part of the U4/U6-U5 tri-snRNP complex and the precatalytic spliceosome.

It is found in the nucleus. Plays a role in pre-mRNA splicing as component of the U4/U6-U5 tri-snRNP complex that is involved in spliceosome assembly, and as component of the precatalytic spliceosome (spliceosome B complex). The heptameric LSM2-8 complex binds specifically to the 3'-terminal U-tract of U6 snRNA. The sequence is that of U6 snRNA-associated Sm-like protein LSm8 (LSM8) from Bos taurus (Bovine).